The sequence spans 268 residues: Glutamate racemase (268 aa).

Residues aspartate 9–serine 10 and tyrosine 41–glycine 42 each bind substrate. The active-site Proton donor/acceptor is the cysteine 73. A substrate-binding site is contributed by asparagine 74–serine 75. Cysteine 183 (proton donor/acceptor) is an active-site residue. Threonine 184–histidine 185 serves as a coordination point for substrate.

The protein belongs to the aspartate/glutamate racemases family.

The catalysed reaction is L-glutamate = D-glutamate. The protein operates within cell wall biogenesis; peptidoglycan biosynthesis. Functionally, provides the (R)-glutamate required for cell wall biosynthesis. This chain is Glutamate racemase, found in Shewanella piezotolerans (strain WP3 / JCM 13877).